The primary structure comprises 262 residues: Small ribosomal subunit protein eS4y (262 aa).

The region spanning 42–104 (LPLVLIIRNR…TNENFRLLYD (63 aa)) is the S4 RNA-binding domain.

This sequence belongs to the eukaryotic ribosomal protein eS4 family.

It is found in the cytoplasm. This Arabidopsis thaliana (Mouse-ear cress) protein is Small ribosomal subunit protein eS4y (RPS4B).